A 356-amino-acid chain; its full sequence is 3-dehydroquinate synthase (356 aa).

Residues 71 to 76 (EGEASK), 105 to 109 (GVTGD), 129 to 130 (TS), K142, and K151 contribute to the NAD(+) site. 3 residues coordinate Zn(2+): E184, H247, and H264.

The protein belongs to the sugar phosphate cyclases superfamily. Dehydroquinate synthase family. Co(2+) serves as cofactor. The cofactor is Zn(2+). NAD(+) is required as a cofactor.

It localises to the cytoplasm. It carries out the reaction 7-phospho-2-dehydro-3-deoxy-D-arabino-heptonate = 3-dehydroquinate + phosphate. It participates in metabolic intermediate biosynthesis; chorismate biosynthesis; chorismate from D-erythrose 4-phosphate and phosphoenolpyruvate: step 2/7. In terms of biological role, catalyzes the conversion of 3-deoxy-D-arabino-heptulosonate 7-phosphate (DAHP) to dehydroquinate (DHQ). The protein is 3-dehydroquinate synthase of Lactococcus lactis subsp. cremoris (strain MG1363).